Here is a 79-residue protein sequence, read N- to C-terminus: MKTFLFLFAVFFFLDPAKNAFFDEKCSRINGRCTESCLKNEELIALCQKNLKCCVTVQPCGRDKGDELDEDSGYNRTRG.

The N-terminal stretch at 1-20 (MKTFLFLFAVFFFLDPAKNA) is a signal peptide. Cystine bridges form between cysteine 26/cysteine 53, cysteine 33/cysteine 47, and cysteine 37/cysteine 54.

Belongs to the beta-defensin family.

It localises to the secreted. Has antibacterial activity. The chain is Beta-defensin 15 (Defb15) from Rattus norvegicus (Rat).